A 388-amino-acid chain; its full sequence is Ribosomal RNA large subunit methyltransferase F (388 aa).

Residues 1–22 show a composition bias toward polar residues; that stretch reads MKTNNHNAKQAQTKTAKSNPSK. The tract at residues 1 to 51 is disordered; it reads MKTNNHNAKQAQTKTAKSNPSKEVTKIKPKRVKNKPTAKAAKSTGLKTNAA. Residues 27-36 are compositionally biased toward basic residues; it reads IKPKRVKNKP.

Belongs to the methyltransferase superfamily. METTL16/RlmF family.

The protein resides in the cytoplasm. The catalysed reaction is adenosine(1618) in 23S rRNA + S-adenosyl-L-methionine = N(6)-methyladenosine(1618) in 23S rRNA + S-adenosyl-L-homocysteine + H(+). In terms of biological role, specifically methylates the adenine in position 1618 of 23S rRNA. This chain is Ribosomal RNA large subunit methyltransferase F, found in Vibrio campbellii (strain ATCC BAA-1116).